Here is a 407-residue protein sequence, read N- to C-terminus: uncharacterized protein (407 aa).

This is an uncharacterized protein from Saimiriine herpesvirus 2 (strain 11) (SaHV-2).